The primary structure comprises 345 residues: Isopentenyl-diphosphate delta-isomerase (345 aa).

Position 6 to 7 (R6 to K7) interacts with substrate. FMN is bound by residues S63 to T65, S93, and N122. S93–R95 is a binding site for substrate. Q156 provides a ligand contact to substrate. Residue E157 coordinates Mg(2+). FMN is bound by residues K188, T218, G265–R267, and A286–L287.

Belongs to the IPP isomerase type 2 family. As to quaternary structure, homooctamer. Dimer of tetramers. FMN serves as cofactor. The cofactor is NADPH. Requires Mg(2+) as cofactor.

The protein resides in the cytoplasm. The enzyme catalyses isopentenyl diphosphate = dimethylallyl diphosphate. In terms of biological role, involved in the biosynthesis of isoprenoids. Catalyzes the 1,3-allylic rearrangement of the homoallylic substrate isopentenyl (IPP) to its allylic isomer, dimethylallyl diphosphate (DMAPP). This is Isopentenyl-diphosphate delta-isomerase from Archaeoglobus fulgidus (strain ATCC 49558 / DSM 4304 / JCM 9628 / NBRC 100126 / VC-16).